A 41-amino-acid chain; its full sequence is Competence-stimulating peptide type 2 (41 aa).

A propeptide spanning residues Met1 to Gly24 is cleaved from the precursor.

This sequence belongs to the ComC family.

The protein resides in the secreted. In terms of biological role, acts as a pheromone, induces cells to develop competence for genetic transformation. The sequence is that of Competence-stimulating peptide type 2 (comC2) from Streptococcus pneumoniae serotype 4 (strain ATCC BAA-334 / TIGR4).